The chain runs to 572 residues: NADP-dependent malic enzyme (572 aa).

N-acetylmethionine is present on M1. The Proton donor role is filled by Y102. R155 lines the NADP(+) pocket. K173 serves as the catalytic Proton acceptor. 3 residues coordinate a divalent metal cation: E245, D246, and D269. NADP(+) is bound by residues D269 and 301-318 (GAGE…MALE). S336 carries the phosphoserine modification. N408 is a binding site for NADP(+).

This sequence belongs to the malic enzymes family. In terms of assembly, homotetramer. The cofactor is Mg(2+). It depends on Mn(2+) as a cofactor. As to expression, expressed in all tissues tested including liver, placenta and white adipose tissue.

It is found in the cytoplasm. The catalysed reaction is (S)-malate + NADP(+) = pyruvate + CO2 + NADPH. The enzyme catalyses oxaloacetate + H(+) = pyruvate + CO2. Catalyzes the oxidative decarboxylation of (S)-malate in the presence of NADP(+) and divalent metal ions, and decarboxylation of oxaloacetate. This is NADP-dependent malic enzyme from Homo sapiens (Human).